Reading from the N-terminus, the 239-residue chain is Serine protease SplC (239 aa).

Residues 1 to 36 (MNKNIVIKSMAALAILTSVTGINAAVVEETQQIANA) form the signal peptide. Catalysis depends on charge relay system residues H75, D113, and S193.

Belongs to the peptidase S1B family.

It is found in the secreted. In Staphylococcus aureus (strain USA300 / TCH1516), this protein is Serine protease SplC (splC).